A 229-amino-acid polypeptide reads, in one-letter code: MDLLQFLAAFSVLLWPGTEVTGALKSTLDPSLKIYKKMFEVKRREQLLALKNLAQLNDIHQQYKILDVMLKGLFKVLEDSRTVLIAADVLPDGPVPQDEKLKDAFSHVVENTAFFGDVVLRFPKIVHHYFDHNSNWNLLIRWGISFCNQTGVFDQGPHSPILSLMAQELGITEKDSDFRNPFKTDQTEFIPSTDPFQKALREEEKRRKKEERRKEIRKGPRISRSQSEL.

A signal peptide spans 1 to 22 (MDLLQFLAAFSVLLWPGTEVTG). Residue Asn148 is glycosylated (N-linked (GlcNAc...) asparagine). The segment at 182 to 229 (FKTDQTEFIPSTDPFQKALREEEKRRKKEERRKEIRKGPRISRSQSEL) is disordered. Residues 196-218 (FQKALREEEKRRKKEERRKEIRK) are a coiled coil. The short motif at 226–229 (QSEL) is the Prevents secretion from ER element.

The protein belongs to the CCDC134 family. Interacts with TADA2A. Associates with the PCAF complex via TADA2A binding. In terms of processing, O-glycosylated, with additional sialic acid modifications.

It is found in the endoplasmic reticulum lumen. It localises to the secreted. The protein localises to the cytoplasm. The protein resides in the nucleus. In terms of biological role, molecular adapter required to prevent protein hyperglycosylation of HSP90B1: during translation, associates with nascent HSP90B1 and the STT3A catalytic component of the OST-A complex and tethers them to a specialized translocon that forms a microenvironment for HSP90B1 folding. In the CCDC134-containing translocon, STT3A associates with the SRT pseudosubstrate motif of HSP90B1, preventing access to facultative glycosylation sites until folding is completed, preventing hyperglycosylation and subsequent degradation of HSP90B1. In extracellular secreted form, promotes proliferation and activation of CD8(+) T-cells, suggesting a cytokine-like function. May inhibit ERK and JNK signaling activity. May suppress cell migration and invasion activity, via its effects on ERK and JNK signaling. May also localize in the nucleus: enhances stability of the PCAF histone acetyltransferase (HAT) complex member TADA2A and thus promotes PCAF-mediated histone acetyltransferase activity. Has a critical role in the regulation of osteogenesis and bone development. In Mus musculus (Mouse), this protein is Coiled-coil domain-containing protein 134 (Ccdc134).